Reading from the N-terminus, the 470-residue chain is Cysteine--tRNA ligase (470 aa).

Cys-27 is a Zn(2+) binding site. The short motif at 29 to 39 is the 'HIGH' region element; the sequence is PTVYNFFHIGN. 3 residues coordinate Zn(2+): Cys-211, His-236, and Glu-240. Positions 268–272 match the 'KMSKS' region motif; it reads KMSKS. Lys-271 lines the ATP pocket.

Belongs to the class-I aminoacyl-tRNA synthetase family. In terms of assembly, monomer. Zn(2+) serves as cofactor.

The protein resides in the cytoplasm. The enzyme catalyses tRNA(Cys) + L-cysteine + ATP = L-cysteinyl-tRNA(Cys) + AMP + diphosphate. The sequence is that of Cysteine--tRNA ligase from Clostridium botulinum (strain Eklund 17B / Type B).